The following is a 213-amino-acid chain: MSYAYLFKYIIIGDTGVGKSCLLLQFTDKRFQPVHDLTIGVEFGARMINIDGKQIKLQIWDTAGQESFRSITRSYYRGAAGALLVYDITRRETFNHLASWLEDARQHANPNMTIMLIGNKCDLTHRRAVTTEEGEQFAKEHGLIFLETSARTAHNVEEAFINTAKEIYKKIQDGVFDVSNESYGIKVGYGAGNAGPQAAKPGEGDARKSSSCC.

13–21 (GDTGVGKSC) lines the GTP pocket. Positions 35–43 (HDLTIGVEF) match the Effector region motif. GTP contacts are provided by residues 61-65 (DTAGQ), 119-122 (NKCD), and 149-151 (SAR). Residues 194–213 (AGPQAAKPGEGDARKSSSCC) form a disordered region. Residues 202–213 (GEGDARKSSSCC) show a composition bias toward basic and acidic residues. Residues C212 and C213 are each lipidated (S-geranylgeranyl cysteine).

This sequence belongs to the small GTPase superfamily. Rab family.

It localises to the cell membrane. Protein transport. Probably involved in vesicular traffic. The sequence is that of GTP-binding protein yptV4 (YPTV4) from Volvox carteri (Green alga).